A 635-amino-acid polypeptide reads, in one-letter code: Sodium-dependent multivitamin transporter (635 aa).

3 helical membrane passes run 24–44 (FSIMDYVVFVLLLVLSLAIGL), 68–88 (CLPVALSLLATFQSAVAILGV), and 101–121 (FLGCCYFLGLLIPAHIFIPVF). N-linked (GlcNAc...) asparagine glycosylation is present at Asn-138. 9 consecutive transmembrane segments (helical) span residues 143 to 163 (VCGTVTFIFQMVIYMGVVLYA), 176 to 196 (LWLSVLALGIVCTVYTALGGL), 199 to 219 (VIWTDVFQTLVMFLGQLAVII), 256 to 276 (FWTLAFGGVFMMLSLYGVNQA), 297 to 317 (VFPFQQVSLCVGCLIGLVMFA), 336 to 356 (FVLYFVMDLLKGLPGLPGLFI), 396 to 416 (IMLSRGLAFGYGLLCLGMAYI), 428 to 448 (ISIFGMVGGPLLGLFCLGMFF), and 456 to 476 (AVVGLLAGLVMAFWIGIGSIV). N-linked (GlcNAc...) asparagine glycosylation is found at Asn-489 and Asn-498. A helical membrane pass occupies residues 528–548 (LWYSAHNSTTVIVVGLIVSLL).

The protein belongs to the sodium:solute symporter (SSF) (TC 2.A.21) family. In terms of assembly, interacts with PDZD11. Post-translationally, may be glycosylated. In terms of tissue distribution, expressed in microvessels of the brain (at protein level). Expressed in heart, brain, placenta, lung, liver, skeletal muscle, kidney, and pancreas.

The protein localises to the cell membrane. It is found in the apical cell membrane. The enzyme catalyses biotin(out) + 2 Na(+)(out) = biotin(in) + 2 Na(+)(in). It catalyses the reaction (R)-pantothenate(out) + 2 Na(+)(out) = (R)-pantothenate(in) + 2 Na(+)(in). It carries out the reaction (R)-lipoate(out) + 2 Na(+)(out) = (R)-lipoate(in) + 2 Na(+)(in). The catalysed reaction is iodide(out) + 2 Na(+)(out) = iodide(in) + 2 Na(+)(in). Its function is as follows. Sodium-dependent multivitamin transporter that mediates the electrogenic transport of pantothenate, biotin, lipoate and iodide. Functions as a Na(+)-coupled substrate symporter where the stoichiometry of Na(+):substrate is 2:1, creating an electrochemical Na(+) gradient used as driving force for substrate uptake. Required for biotin and pantothenate uptake in the intestine across the brush border membrane. Plays a role in the maintenance of intestinal mucosa integrity, by providing the gut mucosa with biotin. Contributes to the luminal uptake of biotin and pantothenate into the brain across the blood-brain barrier. This is Sodium-dependent multivitamin transporter from Homo sapiens (Human).